A 386-amino-acid polypeptide reads, in one-letter code: Alcohol dehydrogenase-like 2 (386 aa).

Positions 51, 53, 74, 104, 107, 110, 118, and 183 each coordinate Zn(2+). Residues threonine 53 and histidine 74 each contribute to the an alcohol site. Threonine 53 contributes to the NAD(+) binding site. Residues 208-213 (GLGAVG), aspartate 232, lysine 237, 302-304 (LGM), phenylalanine 329, and arginine 379 each bind NAD(+).

It belongs to the zinc-containing alcohol dehydrogenase family. Class-III subfamily. Homodimer. The cofactor is Zn(2+).

The protein localises to the cytoplasm. It carries out the reaction a primary alcohol + NAD(+) = an aldehyde + NADH + H(+). It catalyses the reaction a secondary alcohol + NAD(+) = a ketone + NADH + H(+). The sequence is that of Alcohol dehydrogenase-like 2 from Arabidopsis thaliana (Mouse-ear cress).